Here is a 362-residue protein sequence, read N- to C-terminus: Exopolygalacturonase (362 aa).

PbH1 repeat units follow at residues Cys-138–Arg-164, Ser-165–Asp-186, Ser-188–Ser-208, and Val-218–Thr-239. Asn-140 is a glycosylation site (N-linked (GlcNAc...) asparagine). The active-site Proton donor is Asp-179. Residues Asn-192 and Asn-195 are each glycosylated (N-linked (GlcNAc...) asparagine). Residue His-202 is part of the active site. Asn-225 is a glycosylation site (N-linked (GlcNAc...) asparagine).

Belongs to the glycosyl hydrolase 28 family. Pollen tubes growing through the style during pollination.

Its subcellular location is the secreted. It is found in the cell wall. It catalyses the reaction [(1-&gt;4)-alpha-D-galacturonosyl](n) + H2O = alpha-D-galacturonate + [(1-&gt;4)-alpha-D-galacturonosyl](n-1). In terms of biological role, may function in depolymerizing pectin during pollen development, germination, and tube growth. Acts as an exo-polygalacturonase. The chain is Exopolygalacturonase from Oenothera organensis (Evening primrose).